Reading from the N-terminus, the 93-residue chain is Co-chaperonin GroES (93 aa).

The protein belongs to the GroES chaperonin family. As to quaternary structure, heptamer of 7 subunits arranged in a ring. Interacts with the chaperonin GroEL.

Its subcellular location is the cytoplasm. Functionally, together with the chaperonin GroEL, plays an essential role in assisting protein folding. The GroEL-GroES system forms a nano-cage that allows encapsulation of the non-native substrate proteins and provides a physical environment optimized to promote and accelerate protein folding. GroES binds to the apical surface of the GroEL ring, thereby capping the opening of the GroEL channel. In Streptococcus intermedius, this protein is Co-chaperonin GroES.